A 274-amino-acid chain; its full sequence is tRNA pseudouridine synthase A (274 aa).

The active-site Nucleophile is the Asp51. Tyr109 is a substrate binding site.

It belongs to the tRNA pseudouridine synthase TruA family. Homodimer.

The enzyme catalyses uridine(38/39/40) in tRNA = pseudouridine(38/39/40) in tRNA. Functionally, formation of pseudouridine at positions 38, 39 and 40 in the anticodon stem and loop of transfer RNAs. In Acidovorax ebreus (strain TPSY) (Diaphorobacter sp. (strain TPSY)), this protein is tRNA pseudouridine synthase A.